A 213-amino-acid chain; its full sequence is ATP synthase peripheral stalk subunit OSCP, mitochondrial (213 aa).

The N-terminal 23 residues, 1 to 23 (MATPAVSGLSRQVRCFSTSVVRP), are a transit peptide targeting the mitochondrion. Positions 5–23 (AVSGLSRQVRCFSTSVVRP) match the SIFI-degron motif. Lys-54, Lys-60, Lys-70, and Lys-73 each carry N6-acetyllysine. N6-succinyllysine is present on Lys-90. An N6-acetyllysine; alternate mark is found at Lys-158 and Lys-162. Lys-158 and Lys-162 each carry N6-succinyllysine; alternate. Lys-172, Lys-176, and Lys-192 each carry N6-acetyllysine. At Lys-199 the chain carries N6-succinyllysine.

Belongs to the ATPase delta chain family. As to quaternary structure, component of the ATP synthase complex composed at least of ATP5F1A/subunit alpha, ATP5F1B/subunit beta, ATP5MC1/subunit c (homooctomer), MT-ATP6/subunit a, MT-ATP8/subunit 8, ATP5ME/subunit e, ATP5MF/subunit f, ATP5MG/subunit g, ATP5MK/subunit k, ATP5MJ/subunit j, ATP5F1C/subunit gamma, ATP5F1D/subunit delta, ATP5F1E/subunit epsilon, ATP5PF/subunit F6, ATP5PB/subunit b, ATP5PD/subunit d, ATP5PO/subunit OSCP. ATP synthase complex consists of a soluble F(1) head domain (subunits alpha(3) and beta(3)) - the catalytic core - and a membrane F(0) domain - the membrane proton channel (subunits c, a, 8, e, f, g, k and j). These two domains are linked by a central stalk (subunits gamma, delta, and epsilon) rotating inside the F1 region and a stationary peripheral stalk (subunits F6, b, d, and OSCP). Post-translationally, acetylation at Lys-162 decreases ATP production. Deacetylated by SIRT3. In terms of processing, in response to mitochondrial stress, the precursor protein is ubiquitinated by the SIFI complex in the cytoplasm before mitochondrial import, leading to its degradation. Within the SIFI complex, UBR4 initiates ubiquitin chain that are further elongated or branched by KCMF1.

The protein resides in the mitochondrion. It is found in the mitochondrion inner membrane. Functionally, subunit OSCP, of the mitochondrial membrane ATP synthase complex (F(1)F(0) ATP synthase or Complex V) that produces ATP from ADP in the presence of a proton gradient across the membrane which is generated by electron transport complexes of the respiratory chain. ATP synthase complex consist of a soluble F(1) head domain - the catalytic core - and a membrane F(1) domain - the membrane proton channel. These two domains are linked by a central stalk rotating inside the F(1) region and a stationary peripheral stalk. During catalysis, ATP synthesis in the catalytic domain of F(1) is coupled via a rotary mechanism of the central stalk subunits to proton translocation. In vivo, can only synthesize ATP although its ATP hydrolase activity can be activated artificially in vitro. Part of the complex F(0) domain. Part of the complex F(0) domain and the peripheric stalk, which acts as a stator to hold the catalytic alpha(3)beta(3) subcomplex and subunit a/ATP6 static relative to the rotary elements. This is ATP synthase peripheral stalk subunit OSCP, mitochondrial from Pongo abelii (Sumatran orangutan).